A 353-amino-acid chain; its full sequence is Histidinol-phosphate aminotransferase (353 aa).

At K211 the chain carries N6-(pyridoxal phosphate)lysine.

This sequence belongs to the class-II pyridoxal-phosphate-dependent aminotransferase family. Histidinol-phosphate aminotransferase subfamily. As to quaternary structure, homodimer. Pyridoxal 5'-phosphate is required as a cofactor.

The catalysed reaction is L-histidinol phosphate + 2-oxoglutarate = 3-(imidazol-4-yl)-2-oxopropyl phosphate + L-glutamate. The protein operates within amino-acid biosynthesis; L-histidine biosynthesis; L-histidine from 5-phospho-alpha-D-ribose 1-diphosphate: step 7/9. This chain is Histidinol-phosphate aminotransferase, found in Klebsiella pneumoniae subsp. pneumoniae (strain ATCC 700721 / MGH 78578).